The primary structure comprises 527 residues: Amidophosphoribosyltransferase (527 aa).

The segment at 1 to 30 (MAVDSDYVTDRAAGSRQTVTGQQPEQDLNS) is disordered. Residues 1–34 (MAVDSDYVTDRAAGSRQTVTGQQPEQDLNSPREE) constitute a propeptide that is removed on maturation. A compositionally biased stretch (polar residues) spans 15–29 (SRQTVTGQQPEQDLN). Residue Cys35 is the Nucleophile of the active site. Residues 35 to 261 (CGVFGVWAPG…PGELLAIDAD (227 aa)) enclose the Glutamine amidotransferase type-2 domain. Position 276 (Cys276) interacts with [4Fe-4S] cluster. Mg(2+) is bound by residues Ser323, Asp385, and Asp386. 3 residues coordinate [4Fe-4S] cluster: Cys422, Cys478, and Cys481.

This sequence in the C-terminal section; belongs to the purine/pyrimidine phosphoribosyltransferase family. The cofactor is Mg(2+). [4Fe-4S] cluster is required as a cofactor.

It catalyses the reaction 5-phospho-beta-D-ribosylamine + L-glutamate + diphosphate = 5-phospho-alpha-D-ribose 1-diphosphate + L-glutamine + H2O. It participates in purine metabolism; IMP biosynthesis via de novo pathway; N(1)-(5-phospho-D-ribosyl)glycinamide from 5-phospho-alpha-D-ribose 1-diphosphate: step 1/2. In terms of biological role, catalyzes the formation of phosphoribosylamine from phosphoribosylpyrophosphate (PRPP) and glutamine. The polypeptide is Amidophosphoribosyltransferase (Mycobacterium bovis (strain ATCC BAA-935 / AF2122/97)).